We begin with the raw amino-acid sequence, 285 residues long: Energy-coupling factor transporter ATP-binding protein EcfA1 (285 aa).

The ABC transporter domain maps to 9 to 246 (VTVEHLSFTY…VSLIKNAGLD (238 aa)). 43-50 (GHNGSGKS) serves as a coordination point for ATP.

It belongs to the ABC transporter superfamily. Energy-coupling factor EcfA family. As to quaternary structure, forms a stable energy-coupling factor (ECF) transporter complex composed of 2 membrane-embedded substrate-binding proteins (S component), 2 ATP-binding proteins (A component) and 2 transmembrane proteins (T component).

The protein localises to the cell membrane. Functionally, ATP-binding (A) component of a common energy-coupling factor (ECF) ABC-transporter complex. Unlike classic ABC transporters this ECF transporter provides the energy necessary to transport a number of different substrates. This Lactobacillus gasseri (strain ATCC 33323 / DSM 20243 / BCRC 14619 / CIP 102991 / JCM 1131 / KCTC 3163 / NCIMB 11718 / NCTC 13722 / AM63) protein is Energy-coupling factor transporter ATP-binding protein EcfA1.